The primary structure comprises 268 residues: TodF product hydratase (268 aa).

It belongs to the hydratase/decarboxylase family.

It functions in the pathway xenobiotic degradation; toluene degradation. In terms of biological role, converts the product of 2-hydroxy-6-oxo-2,4-heptadienoate hydrolase. In Pseudomonas putida (strain ATCC 700007 / DSM 6899 / JCM 31910 / BCRC 17059 / LMG 24140 / F1), this protein is TodF product hydratase (todJ).